Consider the following 119-residue polypeptide: Phytosulfokines 2 (119 aa).

Positions 1–34 (MSTTRGVSSSSAAAALALLLLFALCFFSFHSAAA) are cleaved as a signal peptide. Residues 35–109 (ARAVPRDEHQ…RRLLSDAHLD (75 aa)) constitute a propeptide that is removed on maturation. 2 positions are modified to sulfotyrosine: Tyr110 and Tyr112. The propeptide occupies 115-119 (HKNKP).

Belongs to the phytosulfokine family. In terms of processing, sulfation is important for activity and for the binding to a putative membrane receptor. PSK-alpha is produced by endopeptidase digestion. PSK-beta is produced from PSK-alpha by exopeptidase digestion.

The protein localises to the secreted. Promotes plant cell differentiation, organogenesis and somatic embryogenesis as well as cell proliferation. This is Phytosulfokines 2 (PSK2) from Oryza sativa subsp. indica (Rice).